The sequence spans 155 residues: MSVTLDLQIACADSTGLPSETQFQQWLDTAVLPFQQEAEVTIRLVDEAESNELNLTYRGKDKPTNVLSFPFECPPEVEDFPLLGDLIICRQVVEKEALEQQKTLESHWAHMVIHGSLHLLGYDHIEDEEAEEMEALEKEFMQTLGFPDPYKDDEI.

Zn(2+)-binding residues include His114, His118, and His124.

The protein belongs to the endoribonuclease YbeY family. Zn(2+) is required as a cofactor.

It is found in the cytoplasm. In terms of biological role, single strand-specific metallo-endoribonuclease involved in late-stage 70S ribosome quality control and in maturation of the 3' terminus of the 16S rRNA. This is Endoribonuclease YbeY from Tolumonas auensis (strain DSM 9187 / NBRC 110442 / TA 4).